The primary structure comprises 319 residues: Ferrochelatase (319 aa).

The Fe cation site is built by H193 and E274.

This sequence belongs to the ferrochelatase family.

Its subcellular location is the cytoplasm. It catalyses the reaction heme b + 2 H(+) = protoporphyrin IX + Fe(2+). It participates in porphyrin-containing compound metabolism; protoheme biosynthesis; protoheme from protoporphyrin-IX: step 1/1. Functionally, catalyzes the ferrous insertion into protoporphyrin IX. In Erwinia tasmaniensis (strain DSM 17950 / CFBP 7177 / CIP 109463 / NCPPB 4357 / Et1/99), this protein is Ferrochelatase.